Here is a 485-residue protein sequence, read N- to C-terminus: GlcNAc-binding protein A (485 aa).

The first 29 residues, 1-29 (MKKQPQKTLLAIALSVVSGTAMSHGYVSA), serve as a signal peptide directing secretion. Residues 30–200 (VENGVAEARV…SFYNVIDVKF (171 aa)) form the Chitin-binding type-4 domain. In terms of domain architecture, Chitin-binding type-3 spans 437–478 (ADTKVLASDGAIYQCKPFPYSGYCVQWTPTATQYQPGTGSHW).

The protein belongs to the GbpA family.

It localises to the secreted. Its function is as follows. Probably interacts with GlcNAc residues. May promote attachment to both epithelial cell surfaces and chitin. This Vibrio vulnificus (strain CMCP6) protein is GlcNAc-binding protein A.